The sequence spans 462 residues: cAMP-dependent protein kinase regulatory subunit (462 aa).

A dimerization and phosphorylation region spans residues 54–203 (TPSPRFPPSP…RLKYAIEGNF (150 aa)). The segment at 79–157 (FGANANPFGG…PTTDSYPAQY (79 aa)) is disordered. The span at 80–102 (GANANPFGGSSSNPNPFGGSASP) shows a compositional bias: low complexity. A Phosphoserine modification is found at S164. 3',5'-cyclic AMP-binding positions include 204–333 (LFSH…FLEE), E282, R291, 336–453 (ILSS…KTGV), E401, and R410.

Belongs to the cAMP-dependent kinase regulatory chain family. In terms of assembly, tetramer, composed of 2 regulatory (R) and 2 catalytic (C) subunits. In the presence of cAMP it dissociates into 2 active monomeric C subunits and an R dimer.

The polypeptide is cAMP-dependent protein kinase regulatory subunit (pkar1) (Hypocrea atroviridis (Trichoderma atroviride)).